A 479-amino-acid polypeptide reads, in one-letter code: Glutamyl-tRNA(Gln) amidotransferase subunit A (479 aa).

Residues Lys-71 and Ser-146 each act as charge relay system in the active site. The active-site Acyl-ester intermediate is Ser-170.

Belongs to the amidase family. GatA subfamily. As to quaternary structure, heterotrimer of A, B and C subunits.

The catalysed reaction is L-glutamyl-tRNA(Gln) + L-glutamine + ATP + H2O = L-glutaminyl-tRNA(Gln) + L-glutamate + ADP + phosphate + H(+). Allows the formation of correctly charged Gln-tRNA(Gln) through the transamidation of misacylated Glu-tRNA(Gln) in organisms which lack glutaminyl-tRNA synthetase. The reaction takes place in the presence of glutamine and ATP through an activated gamma-phospho-Glu-tRNA(Gln). The sequence is that of Glutamyl-tRNA(Gln) amidotransferase subunit A from Lactobacillus johnsonii (strain CNCM I-12250 / La1 / NCC 533).